Reading from the N-terminus, the 395-residue chain is 1-deoxy-D-xylulose 5-phosphate reductoisomerase (395 aa).

NADPH is bound by residues Thr15, Gly16, Ser17, Ile18, Gly41, Asn43, and Asn126. A 1-deoxy-D-xylulose 5-phosphate-binding site is contributed by Lys127. Position 128 (Glu128) interacts with NADPH. Mn(2+) is bound at residue Asp152. Residues Ser153, Glu154, Ser178, and His201 each contribute to the 1-deoxy-D-xylulose 5-phosphate site. Glu154 is a Mn(2+) binding site. Residue Gly207 coordinates NADPH. Ser214, Asn219, Lys220, and Glu223 together coordinate 1-deoxy-D-xylulose 5-phosphate. Glu223 contacts Mn(2+).

It belongs to the DXR family. It depends on Mg(2+) as a cofactor. Requires Mn(2+) as cofactor.

The enzyme catalyses 2-C-methyl-D-erythritol 4-phosphate + NADP(+) = 1-deoxy-D-xylulose 5-phosphate + NADPH + H(+). Its pathway is isoprenoid biosynthesis; isopentenyl diphosphate biosynthesis via DXP pathway; isopentenyl diphosphate from 1-deoxy-D-xylulose 5-phosphate: step 1/6. In terms of biological role, catalyzes the NADPH-dependent rearrangement and reduction of 1-deoxy-D-xylulose-5-phosphate (DXP) to 2-C-methyl-D-erythritol 4-phosphate (MEP). The sequence is that of 1-deoxy-D-xylulose 5-phosphate reductoisomerase from Ruegeria sp. (strain TM1040) (Silicibacter sp.).